The sequence spans 443 residues: tRNA modification GTPase MnmE (443 aa).

(6S)-5-formyl-5,6,7,8-tetrahydrofolate-binding residues include Arg23, Glu80, and Lys120. One can recognise a TrmE-type G domain in the interval 217 to 367; it reads GFEVVILGAP…LLAEIGRRAA (151 aa). GTP is bound by residues 227-232, 246-252, and 271-274; these read NAGKSS, TDEPGTT, and DTAG. Residues Ser231 and Thr252 each coordinate Mg(2+). Lys443 contributes to the (6S)-5-formyl-5,6,7,8-tetrahydrofolate binding site.

It belongs to the TRAFAC class TrmE-Era-EngA-EngB-Septin-like GTPase superfamily. TrmE GTPase family. Homodimer. Heterotetramer of two MnmE and two MnmG subunits. Requires K(+) as cofactor.

Its subcellular location is the cytoplasm. In terms of biological role, exhibits a very high intrinsic GTPase hydrolysis rate. Involved in the addition of a carboxymethylaminomethyl (cmnm) group at the wobble position (U34) of certain tRNAs, forming tRNA-cmnm(5)s(2)U34. This Mesorhizobium japonicum (strain LMG 29417 / CECT 9101 / MAFF 303099) (Mesorhizobium loti (strain MAFF 303099)) protein is tRNA modification GTPase MnmE.